A 270-amino-acid chain; its full sequence is NAD kinase (270 aa).

Aspartate 63 (proton acceptor) is an active-site residue. NAD(+) contacts are provided by residues aspartate 63–glycine 64, asparagine 131–glutamate 132, lysine 142, arginine 159, aspartate 161, threonine 172–serine 177, alanine 196, and glutamine 230.

Belongs to the NAD kinase family. Requires a divalent metal cation as cofactor.

Its subcellular location is the cytoplasm. The enzyme catalyses NAD(+) + ATP = ADP + NADP(+) + H(+). Its function is as follows. Involved in the regulation of the intracellular balance of NAD and NADP, and is a key enzyme in the biosynthesis of NADP. Catalyzes specifically the phosphorylation on 2'-hydroxyl of the adenosine moiety of NAD to yield NADP. In Methanoculleus marisnigri (strain ATCC 35101 / DSM 1498 / JR1), this protein is NAD kinase.